Reading from the N-terminus, the 818-residue chain is Lon protease (818 aa).

One can recognise a Lon N-terminal domain in the interval 14–216 (LPVLPLRDVV…KVFALIEREI (203 aa)). 370-377 (GPPGVGKT) contributes to the ATP binding site. Residues 605-786 (ESLVGIVTGL…DEVIKVALMH (182 aa)) form the Lon proteolytic domain. Residues serine 692 and lysine 735 contribute to the active site.

This sequence belongs to the peptidase S16 family. In terms of assembly, homohexamer. Organized in a ring with a central cavity.

It is found in the cytoplasm. It catalyses the reaction Hydrolysis of proteins in presence of ATP.. ATP-dependent serine protease that mediates the selective degradation of mutant and abnormal proteins as well as certain short-lived regulatory proteins. Required for cellular homeostasis and for survival from DNA damage and developmental changes induced by stress. Degrades polypeptides processively to yield small peptide fragments that are 5 to 10 amino acids long. Binds to DNA in a double-stranded, site-specific manner. The sequence is that of Lon protease from Wolbachia pipientis subsp. Culex pipiens (strain wPip).